Here is a 324-residue protein sequence, read N- to C-terminus: Probable UDP-sugar transporter protein SLC35A4 (324 aa).

Residues 1-18 are Cytoplasmic-facing; sequence MSVEDGGMPGLGRPRQAR. The helical transmembrane segment at 19–39 threads the bilayer; sequence WTLMLLLSTAMYGAHAPLLAL. At 40-52 the chain is on the lumenal side; that stretch reads CHVDGRVPFRPSS. A helical membrane pass occupies residues 53-73; that stretch reads AVLLTELTKLLLCAFSLLVGW. Topologically, residues 74-85 are cytoplasmic; it reads QAWPQGPPPWRQ. The chain crosses the membrane as a helical span at residues 86–106; it reads AAPFALSALLYGANNNLVIYL. The Lumenal segment spans residues 107–142; it reads QRYMDPSTYQVLSNLKIGSTAVLYCLCLRHRLSVRQ. Residues 143 to 163 traverse the membrane as a helical segment; that stretch reads GLALLLLMAAGACYAAGGLQV. Residues 164-180 are Cytoplasmic-facing; that stretch reads PGNTLPSPPPAAAASPM. Residues 181–201 traverse the membrane as a helical segment; sequence PLHITPLGLLLLILYCLISGL. The Lumenal segment spans residues 202-214; sequence SSVYTELLMKRQR. A helical transmembrane segment spans residues 215-235; sequence LPLALQNLFLYTFGVLLNLGL. Residues 236 to 250 lie on the Cytoplasmic side of the membrane; that stretch reads HAGGGSGPGLLEGFS. The chain crosses the membrane as a helical span at residues 251-271; the sequence is GWAALVVLSQALNGLLMSAVM. Residues 272–275 lie on the Lumenal side of the membrane; it reads KHGS. A helical membrane pass occupies residues 276–298; it reads SITRLFVVSCSLVVNAVLSAVLL. Residues 299–324 lie on the Cytoplasmic side of the membrane; the sequence is RLQLTAAFFLATLLIGLAMRLYYGSR.

The protein belongs to the nucleotide-sugar transporter family. SLC35A subfamily. As to quaternary structure, found in a complex with SLC35A2 and SLC35A3.

The protein resides in the golgi apparatus membrane. The catalysed reaction is CDP-L-ribitol(in) + CDP(out) = CDP-L-ribitol(out) + CDP(in). In terms of biological role, mediates the transport of CDP-ribitol. Does not exhibit CMP-sialic acid, UDP-galactose and UDP-N-acetylglucosamine transport activity. This Homo sapiens (Human) protein is Probable UDP-sugar transporter protein SLC35A4.